A 597-amino-acid polypeptide reads, in one-letter code: UvrABC system protein C (597 aa).

In terms of domain architecture, GIY-YIG spans 14 to 91; the sequence is KKPGCYLWKD…INQYQPRFNL (78 aa).

This sequence belongs to the UvrC family. As to quaternary structure, interacts with UvrB in an incision complex.

Its subcellular location is the cytoplasm. Its function is as follows. The UvrABC repair system catalyzes the recognition and processing of DNA lesions. UvrC both incises the 5' and 3' sides of the lesion. The N-terminal half is responsible for the 3' incision and the C-terminal half is responsible for the 5' incision. In Mycoplasma genitalium (strain ATCC 33530 / DSM 19775 / NCTC 10195 / G37) (Mycoplasmoides genitalium), this protein is UvrABC system protein C.